Reading from the N-terminus, the 157-residue chain is Aspartate carbamoyltransferase regulatory chain (157 aa).

Zn(2+) contacts are provided by Cys108, Cys113, Cys138, and Cys141.

This sequence belongs to the PyrI family. As to quaternary structure, contains catalytic and regulatory chains. The cofactor is Zn(2+).

In terms of biological role, involved in allosteric regulation of aspartate carbamoyltransferase. In Ignicoccus hospitalis (strain KIN4/I / DSM 18386 / JCM 14125), this protein is Aspartate carbamoyltransferase regulatory chain.